The chain runs to 602 residues: Serine/threonine-protein phosphatase 2A 56 kDa regulatory subunit delta isoform (602 aa).

The span at 1–13 shows a compositional bias: basic and acidic residues; that stretch reads MPYKLKKEKEPPK. A disordered region spans residues 1–96; it reads MPYKLKKEKE…QSSSRFNLSK (96 aa). 5 repeat units span residues 37-38, 39-40, 41-42, 43-44, and 45-46. Residues 37–52 are 8 X 2 AA approximate tandem repeats of Q-P; that stretch reads QPQPQPQPQPQAQSQP. The span at 46-55 shows a compositional bias: low complexity; that stretch reads PQAQSQPPSS. A 6; approximate repeat occupies 47–48; the sequence is QA. The 7; approximate repeat unit spans residues 49 to 50; the sequence is QS. Residues 51-52 form repeat 8; sequence QP. At T63 the chain carries Phosphothreonine. Phosphoserine is present on residues S88, S89, and S90. An SH3-binding; class I motif is present at residues 523–530; that stretch reads RAPPPLPP. The Nuclear localization signal signature appears at 548-565; the sequence is KRTVETEAVQMLKDIKKE. Residues S573 and S598 each carry the phosphoserine modification.

Belongs to the phosphatase 2A regulatory subunit B56 family. As to quaternary structure, PP2A consists of a common heterodimeric core enzyme, composed of a 36 kDa catalytic subunit (subunit C) and a 65 kDa constant regulatory subunit (PR65 or subunit A), that associates with a variety of regulatory subunits. Proteins that associate with the core dimer include three families of regulatory subunits B (the R2/B/PR55/B55, R3/B''/PR72/PR130/PR59 and R5/B'/B56 families), the 48 kDa variable regulatory subunit, viral proteins, and cell signaling molecules. Interacts with the PP2A A subunit PPP2R1A. Interacts with SGO1. Interacts with ADCY8. In terms of tissue distribution, isoform Delta-2 is widely expressed. Isoform Delta-1 is highly expressed in brain.

It localises to the cytoplasm. The protein localises to the nucleus. Its function is as follows. The B regulatory subunit might modulate substrate selectivity and catalytic activity, and might also direct the localization of the catalytic enzyme to a particular subcellular compartment. The chain is Serine/threonine-protein phosphatase 2A 56 kDa regulatory subunit delta isoform (PPP2R5D) from Homo sapiens (Human).